We begin with the raw amino-acid sequence, 226 residues long: Phosphoribosylformylglycinamidine synthase subunit PurQ (226 aa).

Positions 2-226 (KIAVIVFPGS…LENGTVIAEG (225 aa)) constitute a Glutamine amidotransferase type-1 domain. The Nucleophile role is filled by Cys86. Catalysis depends on residues His195 and Glu197.

Part of the FGAM synthase complex composed of 1 PurL, 1 PurQ and 2 PurS subunits.

Its subcellular location is the cytoplasm. It catalyses the reaction N(2)-formyl-N(1)-(5-phospho-beta-D-ribosyl)glycinamide + L-glutamine + ATP + H2O = 2-formamido-N(1)-(5-O-phospho-beta-D-ribosyl)acetamidine + L-glutamate + ADP + phosphate + H(+). The catalysed reaction is L-glutamine + H2O = L-glutamate + NH4(+). It participates in purine metabolism; IMP biosynthesis via de novo pathway; 5-amino-1-(5-phospho-D-ribosyl)imidazole from N(2)-formyl-N(1)-(5-phospho-D-ribosyl)glycinamide: step 1/2. Functionally, part of the phosphoribosylformylglycinamidine synthase complex involved in the purines biosynthetic pathway. Catalyzes the ATP-dependent conversion of formylglycinamide ribonucleotide (FGAR) and glutamine to yield formylglycinamidine ribonucleotide (FGAM) and glutamate. The FGAM synthase complex is composed of three subunits. PurQ produces an ammonia molecule by converting glutamine to glutamate. PurL transfers the ammonia molecule to FGAR to form FGAM in an ATP-dependent manner. PurS interacts with PurQ and PurL and is thought to assist in the transfer of the ammonia molecule from PurQ to PurL. The protein is Phosphoribosylformylglycinamidine synthase subunit PurQ of Limosilactobacillus fermentum (strain NBRC 3956 / LMG 18251) (Lactobacillus fermentum).